The primary structure comprises 1526 residues: Probable autotransporter YpjA (1526 aa).

An N-terminal signal peptide occupies residues 1 to 29 (MNRTSPYYCRRSVLSLLISALIYAPPGMA). Residues 1173-1223 (NSNWNLTNDVKPNPDPIPNPKPDPKPDPKPDPNPKPDPTPDPTPTPVPEKR) are disordered. Over residues 1194 to 1206 (PDPKPDPKPDPNP) the composition is skewed to basic and acidic residues. Positions 1207-1219 (KPDPTPDPTPTPV) are enriched in pro residues. The Autotransporter domain occupies 1258-1526 (ASPHNNNVWG…NAVAGVNWSF (269 aa)).

It localises to the cell outer membrane. Functionally, upon overexpression shows increased adherence to polyvinyl chloride (PVC) plates, increased mature biofilm formation. This Escherichia coli (strain K12) protein is Probable autotransporter YpjA (ypjA).